The chain runs to 21 residues: Maculatin-1.1 (21 aa).

Phenylalanine amide is present on Phe-21.

Expressed by the skin dorsal glands.

The protein localises to the secreted. Functionally, maculatin-1.1 shows significant antibacterial activity against Gram-positive bacteria, less against Gram-negative bacteria. Maculatin-1.1.1 is inactive. This Ranoidea genimaculata (Brown-spotted tree frog) protein is Maculatin-1.1.